Reading from the N-terminus, the 96-residue chain is Large ribosomal subunit protein bL25 (96 aa).

The protein belongs to the bacterial ribosomal protein bL25 family. As to quaternary structure, part of the 50S ribosomal subunit; part of the 5S rRNA/L5/L18/L25 subcomplex. Contacts the 5S rRNA. Binds to the 5S rRNA independently of L5 and L18.

In terms of biological role, this is one of the proteins that binds to the 5S RNA in the ribosome where it forms part of the central protuberance. This Buchnera aphidicola subsp. Schizaphis graminum (strain Sg) protein is Large ribosomal subunit protein bL25.